The primary structure comprises 262 residues: Snake venom serine protease catroxase-1 (262 aa).

An N-terminal signal peptide occupies residues 1–18; that stretch reads MVLIRVLANLLILQLSYA. Positions 19-24 are excised as a propeptide; it reads QKSSEP. Residues 25–250 form the Peptidase S1 domain; sequence IIGGDECNRN…HLDWIQSIIA (226 aa). 6 disulfides stabilise this stretch: Cys31–Cys162, Cys49–Cys65, Cys97–Cys257, Cys141–Cys211, Cys173–Cys190, and Cys201–Cys226. Residue His64 is the Charge relay system of the active site. N-linked (GlcNAc...) asparagine glycosylation occurs at Asn102. The Charge relay system role is filled by Asp109. N-linked (GlcNAc...) asparagine glycosylation is present at Asn169. Ser205 acts as the Charge relay system in catalysis.

It belongs to the peptidase S1 family. Snake venom subfamily. In terms of assembly, monomer. Expressed by the venom gland.

Its subcellular location is the secreted. Its function is as follows. Snake venom serine protease that may act in the hemostasis system of the prey. This Crotalus atrox (Western diamondback rattlesnake) protein is Snake venom serine protease catroxase-1.